The sequence spans 192 residues: MLKFDNLILASSSKQRLSLLEQIGVVPGEIISPDIDEVILKKELPKAYSIRIAQAKCEKVKLLHPDKFVLSADTVVCCGRRILPKVETEEQALECIRLISGRRHRVYTTVCLYTPHGKLHCRNVVTVVKFKNLSVQEIDAYIDSRQWYGKSGACSIQTNAGKFVLSINGSYSSIIGLPLYETYSILNRYFSI.

Aspartate 73 functions as the Proton acceptor in the catalytic mechanism.

It belongs to the Maf family. The cofactor is a divalent metal cation.

It localises to the cytoplasm. The catalysed reaction is a ribonucleoside 5'-triphosphate + H2O = a ribonucleoside 5'-phosphate + diphosphate + H(+). The enzyme catalyses a 2'-deoxyribonucleoside 5'-triphosphate + H2O = a 2'-deoxyribonucleoside 5'-phosphate + diphosphate + H(+). Functionally, nucleoside triphosphate pyrophosphatase. May have a dual role in cell division arrest and in preventing the incorporation of modified nucleotides into cellular nucleic acids. This chain is Nucleoside triphosphate pyrophosphatase, found in Ehrlichia canis (strain Jake).